We begin with the raw amino-acid sequence, 956 residues long: Zinc fingers and homeoboxes protein 3 (956 aa).

Residues 1 to 107 form a required for nuclear localization region; sequence MASKRKSTTP…SEHTDFNKDP (107 aa). The tract at residues 22-66 is disordered; sequence DASMEAQPAETLPEGPQQDLPPEASAASSEAAQNPSSTDGSTLAN. The segment covering 42-58 has biased composition (low complexity); the sequence is PPEASAASSEAAQNPSS. 2 C2H2-type zinc fingers span residues 77-100 and 109-132; these read YSCK…NSEH and FVCS…ATCH. A required for homodimerization and interaction with NFYA region spans residues 242–488; sequence ASASSAKNPH…LLTACPSITS (247 aa). Residues 303-502 are required for repressor activity; it reads LSSIPTYNAA…DASIYKNKKS (200 aa). 2 consecutive DNA-binding regions (homeobox) follow at residues 304 to 363 and 494 to 553; these read SSIP…GISW and ASIY…RNLK. The segment at 497–555 is required for nuclear localization; the sequence is YKNKKSHEQLSALKGSFCRNQFPGQSEVEHLTKVTGLSTREVRKWFSDRRYHCRNLKGS. Disordered stretches follow at residues 598–618 and 666–695; these read PSAK…KYKE and KVNA…GEED. Residues serine 599 and serine 604 each carry the phosphoserine modification. A DNA-binding region (homeobox 3) is located at residues 612 to 671; sequence TPTKYKERAPEQLRALESSFAQNPLPLDEELDRLRSETKMTRREIDSWFSERRKKVNAEE. A compositionally biased stretch (basic and acidic residues) spans 666–677; sequence KVNAEETKKAEE. A compositionally biased stretch (acidic residues) spans 679 to 695; the sequence is ASQEEEEAAEDEGGEED. Phosphoserine is present on residues serine 680, serine 708, and serine 723. 2 DNA-binding regions (homeobox) span residues 764–823 and 835–894; these read PGKV…KNGQ and FPPG…TRAV. Residues 890–956 form a disordered region; sequence ETRAVADTGS…PQAGRQLETD (67 aa). Phosphoserine occurs at positions 927 and 946.

Belongs to the ZHX family. Homodimer (via homeobox domain 1). Heterodimer with ZHX1 (via homeobox domain 1). Heterodimer with ZHX2 (via homeobox domain 1). Heterodimerization with ZHX1 is a prerequisite for repressor activity. Interacts with NFYA. Widely expressed. High expression in kidney. Expressed during osteogenic differentiation.

It is found in the nucleus. In terms of biological role, acts as a transcriptional repressor. Involved in the early stages of mesenchymal stem cell (MSC) osteogenic differentiation. Is a regulator of podocyte gene expression during primary glomerula disease. Binds to promoter DNA. In Homo sapiens (Human), this protein is Zinc fingers and homeoboxes protein 3 (ZHX3).